The primary structure comprises 171 residues: Protein hunchback (171 aa).

Disordered stretches follow at residues 14 to 93 (PMSH…PMQI) and 124 to 171 (SNDK…KYMA). Positions 17–31 (HHHHHSHHSHGHHHS) are enriched in basic residues. Composition is skewed to low complexity over residues 32–42 (NSNSNASSPRQ) and 52–80 (SSSN…DTPL). Basic and acidic residues predominate over residues 152 to 171 (EPEKDHDLMSNSSEDMKYMA).

This sequence belongs to the hunchback C2H2-type zinc-finger protein family.

The protein localises to the nucleus. In terms of biological role, gap class segmentation protein that controls development of head structures. The chain is Protein hunchback (hb) from Scaptomyza albovittata (Fruit fly).